Here is a 310-residue protein sequence, read N- to C-terminus: MASGAKLEASHPPKAANAAAPAKKVHYPFWFGGSASCFAAAVTHPLDLVKVRLQTRGPGAPSTMVGTFVHVFKNDGFFGLYSGLSAAILRQLTYSTTRFGIYEELKNHFTSPDSPPGLFTLIGMASASGFIGGMAGNPADVLNVRMQSDAALPPAQRRNYRNAIHGLVTMTRTEGPASLFRGVWPNSTRAVLMTTSQLASYDTFKRLCLENLGMSDNMGTHFTASFMAGFVATTVCSPVDVIKTRVMTASPAEGRSQSIVGLLRDITRKEGLAWAFRGWVPSFIRLGPHTIATFIFLEEHKKLYRLLKGL.

Solcar repeat units lie at residues 23–108 (KKVH…LKNH), 115–207 (PPGL…FKRL), and 216–303 (DNMG…HKKL). 6 consecutive transmembrane segments (helical) span residues 29–49 (FWFG…LDLV), 85–105 (SAAI…YEEL), 122–142 (IGMA…ADVL), 186–206 (NSTR…TFKR), 222–242 (FTAS…VDVI), and 275–296 (AFRG…TFIF).

This sequence belongs to the mitochondrial carrier (TC 2.A.29) family.

Its subcellular location is the mitochondrion inner membrane. Its function is as follows. Mitochondrial transporter that does not mediate citrate export from mitochondria to cytoplasm. Its exact function has still to be determined. This Aspergillus niger (strain ATCC 1015 / CBS 113.46 / FGSC A1144 / LSHB Ac4 / NCTC 3858a / NRRL 328 / USDA 3528.7) protein is Mitochondrial citrate transporter F.